The chain runs to 282 residues: Putative 4-diphosphocytidyl-2-C-methyl-D-erythritol kinase (282 aa).

The active site involves K9. An ATP-binding site is contributed by P93–A103. D135 is a catalytic residue.

The protein belongs to the GHMP kinase family. IspE subfamily.

It catalyses the reaction 4-CDP-2-C-methyl-D-erythritol + ATP = 4-CDP-2-C-methyl-D-erythritol 2-phosphate + ADP + H(+). Its function is as follows. Catalyzes the phosphorylation of the position 2 hydroxy group of 4-diphosphocytidyl-2C-methyl-D-erythritol. This chain is Putative 4-diphosphocytidyl-2-C-methyl-D-erythritol kinase, found in Staphylococcus haemolyticus (strain JCSC1435).